Consider the following 804-residue polypeptide: Leucine--tRNA ligase (804 aa).

Positions 39–50 match the 'HIGH' region motif; that stretch reads PYPSGAGLHVGH. The 'KMSKS' region signature appears at 580–584; the sequence is KMSKS. ATP is bound at residue lysine 583.

This sequence belongs to the class-I aminoacyl-tRNA synthetase family.

The protein localises to the cytoplasm. The catalysed reaction is tRNA(Leu) + L-leucine + ATP = L-leucyl-tRNA(Leu) + AMP + diphosphate. This is Leucine--tRNA ligase from Mycoplasma mycoides subsp. mycoides SC (strain CCUG 32753 / NCTC 10114 / PG1).